Here is a 193-residue protein sequence, read N- to C-terminus: Cysteine and glycine-rich protein 1 (193 aa).

The LIM zinc-binding 1 domain occupies 10-61; sequence CGVCQKTVYFAEEVQCEGSSFHKSCFLCLVCKKNLDSTTVAVHGEEIYCKSC. A Nuclear localization signal motif is present at residues 64–69; the sequence is KKYGPK. Ser81 carries the phosphoserine modification. N6-acetyllysine is present on residues Lys84, Lys112, Lys131, Lys137, and Lys161. Residues 119 to 170 enclose the LIM zinc-binding 2 domain; sequence CPRCSQAVYAAEKVIGAGKSWHKSCFRCAKCGKGLESTTLADKDGEIYCKGC. Ser192 carries the post-translational modification Phosphoserine.

Interacts with ASCC1; ASCC2 and TRIP4.

It localises to the nucleus. Its function is as follows. Could play a role in neuronal development. The sequence is that of Cysteine and glycine-rich protein 1 (CSRP1) from Bos taurus (Bovine).